The sequence spans 303 residues: Pseudouridine-5'-phosphate glycosidase (303 aa).

Residue E26 is the Proton donor of the active site. The substrate site is built by K87 and V107. D139 serves as a coordination point for Mn(2+). Substrate is bound at residue 141–143 (SAD). Residue K160 is the Nucleophile of the active site.

This sequence belongs to the pseudouridine-5'-phosphate glycosidase family. In terms of assembly, homotrimer. It depends on Mn(2+) as a cofactor.

It carries out the reaction D-ribose 5-phosphate + uracil = psi-UMP + H2O. Its function is as follows. Catalyzes the reversible cleavage of pseudouridine 5'-phosphate (PsiMP) to ribose 5-phosphate and uracil. Functions biologically in the cleavage direction, as part of a pseudouridine degradation pathway. This chain is Pseudouridine-5'-phosphate glycosidase, found in Saccharopolyspora erythraea (strain ATCC 11635 / DSM 40517 / JCM 4748 / NBRC 13426 / NCIMB 8594 / NRRL 2338).